The chain runs to 305 residues: MENKYTHGVLFYHEHSGLKNINQGIGEVTTALSSICKHLSIQLSENEGDIIKYCQEIKTKNYAKDVDILFILGGDGTVNELINGVMTNDLQLPIGILPGGTFNDFTKTLNIAPNHKQASEQMISAQVGTYDVIKINNQYALNFVGLGLIVQNAENVQDGSKDIFGKLSYIGSTVKTLLNPTQFNYQLSIDDKTYSGETSMILSANGPFIGGSRIPLTDLSPQDGELNTFIFNEQSFSILNDIFKKRDSMNWNEITQGIEHIPGKKISLTTDPAMKVDIDGEISLETPIDIEVIPNAIQLLTVNDL.

Residues 3–139 (NKYTHGVLFY…YDVIKINNQY (137 aa)) form the DAGKc domain. ATP contacts are provided by residues S44, 74–80 (GDGTVNE), and T101. Mg(2+) contacts are provided by S220, D223, and E225. E281 serves as the catalytic Proton acceptor.

Belongs to the diacylglycerol/lipid kinase family. It depends on Mg(2+) as a cofactor.

Functionally, may catalyze the ATP-dependent phosphorylation of lipids other than diacylglycerol (DAG). The protein is Putative lipid kinase SAB0675c of Staphylococcus aureus (strain bovine RF122 / ET3-1).